A 101-amino-acid polypeptide reads, in one-letter code: Small ribosomal subunit protein uS10 (101 aa).

This sequence belongs to the universal ribosomal protein uS10 family. In terms of assembly, part of the 30S ribosomal subunit.

Involved in the binding of tRNA to the ribosomes. The chain is Small ribosomal subunit protein uS10 from Methanocaldococcus jannaschii (strain ATCC 43067 / DSM 2661 / JAL-1 / JCM 10045 / NBRC 100440) (Methanococcus jannaschii).